We begin with the raw amino-acid sequence, 338 residues long: Ketol-acid reductoisomerase (NADP(+)) (338 aa).

The KARI N-terminal Rossmann domain maps to Met-1 to Thr-181. NADP(+) is bound by residues Tyr-24–Gln-27, Arg-47, and Ser-52. His-107 is a catalytic residue. Gly-133 contributes to the NADP(+) binding site. The region spanning Asn-182–Ile-327 is the KARI C-terminal knotted domain. Mg(2+) contacts are provided by Asp-190, Glu-194, Glu-226, and Glu-230. Ser-251 is a binding site for substrate.

This sequence belongs to the ketol-acid reductoisomerase family. It depends on Mg(2+) as a cofactor.

The enzyme catalyses (2R)-2,3-dihydroxy-3-methylbutanoate + NADP(+) = (2S)-2-acetolactate + NADPH + H(+). It catalyses the reaction (2R,3R)-2,3-dihydroxy-3-methylpentanoate + NADP(+) = (S)-2-ethyl-2-hydroxy-3-oxobutanoate + NADPH + H(+). The protein operates within amino-acid biosynthesis; L-isoleucine biosynthesis; L-isoleucine from 2-oxobutanoate: step 2/4. It participates in amino-acid biosynthesis; L-valine biosynthesis; L-valine from pyruvate: step 2/4. Involved in the biosynthesis of branched-chain amino acids (BCAA). Catalyzes an alkyl-migration followed by a ketol-acid reduction of (S)-2-acetolactate (S2AL) to yield (R)-2,3-dihydroxy-isovalerate. In the isomerase reaction, S2AL is rearranged via a Mg-dependent methyl migration to produce 3-hydroxy-3-methyl-2-ketobutyrate (HMKB). In the reductase reaction, this 2-ketoacid undergoes a metal-dependent reduction by NADPH to yield (R)-2,3-dihydroxy-isovalerate. The chain is Ketol-acid reductoisomerase (NADP(+)) from Janthinobacterium sp. (strain Marseille) (Minibacterium massiliensis).